The following is a 96-amino-acid chain: Dynein light chain roadblock-type 2 (96 aa).

Alanine 2 carries the post-translational modification N-acetylalanine.

It belongs to the GAMAD family. As to quaternary structure, homodimer. The cytoplasmic dynein 1 complex consists of two catalytic heavy chains (HCs) and a number of non-catalytic subunits presented by intermediate chains (ICs), light intermediate chains (LICs) and light chains (LCs); the composition seems to vary in respect to the IC, LIC and LC composition. The heavy chain homodimer serves as a scaffold for the probable homodimeric assembly of the respective non-catalytic subunits. The ICs and LICs bind directly to the HC dimer and the LCs assemble on the IC dimer. Interacts with DYNC1I1 and DYNC1I2. Self-associates. Interacts with DYNLRB1.

The protein resides in the cytoplasm. The protein localises to the cytoskeleton. Its function is as follows. Acts as one of several non-catalytic accessory components of the cytoplasmic dynein 1 complex that are thought to be involved in linking dynein to cargos and to adapter proteins that regulate dynein function. Cytoplasmic dynein 1 acts as a motor for the intracellular retrograde motility of vesicles and organelles along microtubules. The protein is Dynein light chain roadblock-type 2 (DYNLRB2) of Bos taurus (Bovine).